The primary structure comprises 395 residues: Phosphoglycerate kinase (395 aa).

Substrate is bound by residues Asp-21 to Asn-23, Arg-36, His-59 to Arg-62, Arg-113, and Arg-146. Residues Lys-197, Glu-324, and Gly-350–Thr-353 each bind ATP.

This sequence belongs to the phosphoglycerate kinase family. As to quaternary structure, monomer.

It is found in the cytoplasm. The catalysed reaction is (2R)-3-phosphoglycerate + ATP = (2R)-3-phospho-glyceroyl phosphate + ADP. Its pathway is carbohydrate degradation; glycolysis; pyruvate from D-glyceraldehyde 3-phosphate: step 2/5. The polypeptide is Phosphoglycerate kinase (Acinetobacter baumannii (strain ATCC 17978 / DSM 105126 / CIP 53.77 / LMG 1025 / NCDC KC755 / 5377)).